The sequence spans 297 residues: Mitochondrial nicotinamide adenine dinucleotide transporter SLC25A51 (297 aa).

Positions 1–11 (MMDSEAHEKRP) are enriched in basic and acidic residues. The tract at residues 1-20 (MMDSEAHEKRPPILTSSKQD) is disordered. Solcar repeat units follow at residues 28 to 108 (VGEM…LSCL), 116 to 200 (PEFA…IKEH), and 213 to 296 (NDFI…LLKV). 6 consecutive transmembrane segments (helical) span residues 36–56 (CGCC…KVLF), 85–105 (LPPL…YEDL), 116–135 (PEFA…EAIF), 179–199 (ILFR…PIKE), 215–235 (FICG…INVV), and 268–289 (LFRG…INAT).

This sequence belongs to the mitochondrial carrier (TC 2.A.29) family.

It is found in the mitochondrion inner membrane. It carries out the reaction NAD(+)(in) = NAD(+)(out). Its function is as follows. Mitochondrial membrane carrier protein that mediates the import of NAD(+) into mitochondria. Mitochondrial NAD(+) is required for glycolysis and mitochondrial respiration. Compared to SLC25A52, SLC25A51-mediated transport is essential for the import of NAD(+) in mitochondria. The transport mechanism, uniport or antiport, its electrogenicity and substrate selectivity, remain to be elucidated. In Homo sapiens (Human), this protein is Mitochondrial nicotinamide adenine dinucleotide transporter SLC25A51.